The primary structure comprises 198 residues: CASP-like protein 1U1 (198 aa).

The Cytoplasmic portion of the chain corresponds to 1-30 (MSDTPVVVIPRKGYVDGHHGYHHSYHSGLN). Residues 31-51 (LLLRLLQAFATAAAVIVMLLA) form a helical membrane-spanning segment. Over 52–73 (TQTEFTRYGEVRGRWRDYPAYK) the chain is Extracellular. The chain crosses the membrane as a helical span at residues 74-94 (WFIIANAVVFVYALLATLVAC). Over 95–117 (CALIARRGPLSYSPSAWLTFLLD) the chain is Cytoplasmic. Residues 118–138 (FVAASALMSAASAALAVALIA) form a helical membrane-spanning segment. Residues 139 to 165 (RNGQNLQGQHYWPTFCNYVTRFCDYAQ) are Extracellular-facing. The chain crosses the membrane as a helical span at residues 166–186 (GAIIASFCGFGLLALSTLLAA). The Cytoplasmic segment spans residues 187 to 198 (SALHHLAWHRLH).

Belongs to the Casparian strip membrane proteins (CASP) family. Homodimer and heterodimers.

It localises to the cell membrane. The protein is CASP-like protein 1U1 of Physcomitrium patens (Spreading-leaved earth moss).